We begin with the raw amino-acid sequence, 208 residues long: Protein-L-isoaspartate O-methyltransferase (208 aa).

Residue serine 59 is part of the active site.

The protein belongs to the methyltransferase superfamily. L-isoaspartyl/D-aspartyl protein methyltransferase family.

The protein resides in the cytoplasm. It catalyses the reaction [protein]-L-isoaspartate + S-adenosyl-L-methionine = [protein]-L-isoaspartate alpha-methyl ester + S-adenosyl-L-homocysteine. Functionally, catalyzes the methyl esterification of L-isoaspartyl residues in peptides and proteins that result from spontaneous decomposition of normal L-aspartyl and L-asparaginyl residues. It plays a role in the repair and/or degradation of damaged proteins. In Yersinia enterocolitica serotype O:8 / biotype 1B (strain NCTC 13174 / 8081), this protein is Protein-L-isoaspartate O-methyltransferase.